The sequence spans 94 residues: Co-chaperonin GroES (94 aa).

It belongs to the GroES chaperonin family. As to quaternary structure, heptamer of 7 subunits arranged in a ring. Interacts with the chaperonin GroEL.

It localises to the cytoplasm. In terms of biological role, together with the chaperonin GroEL, plays an essential role in assisting protein folding. The GroEL-GroES system forms a nano-cage that allows encapsulation of the non-native substrate proteins and provides a physical environment optimized to promote and accelerate protein folding. GroES binds to the apical surface of the GroEL ring, thereby capping the opening of the GroEL channel. The chain is Co-chaperonin GroES from Alkaliphilus metalliredigens (strain QYMF).